The chain runs to 300 residues: Glycerol-3-phosphate dehydrogenase [NAD(P)+] (300 aa).

Positions 11, 33, and 79 each coordinate NADPH. Positions 79, 107, and 109 each coordinate sn-glycerol 3-phosphate. Alanine 111 serves as a coordination point for NADPH. Sn-glycerol 3-phosphate is bound by residues lysine 161, aspartate 214, serine 224, arginine 225, and asparagine 226. Lysine 161 functions as the Proton acceptor in the catalytic mechanism. Arginine 225 is a binding site for NADPH. The NADPH site is built by valine 249 and glutamate 251.

This sequence belongs to the NAD-dependent glycerol-3-phosphate dehydrogenase family.

The protein localises to the cytoplasm. The enzyme catalyses sn-glycerol 3-phosphate + NAD(+) = dihydroxyacetone phosphate + NADH + H(+). It catalyses the reaction sn-glycerol 3-phosphate + NADP(+) = dihydroxyacetone phosphate + NADPH + H(+). Its pathway is membrane lipid metabolism; glycerophospholipid metabolism. Its function is as follows. Catalyzes the reduction of the glycolytic intermediate dihydroxyacetone phosphate (DHAP) to sn-glycerol 3-phosphate (G3P), the key precursor for phospholipid synthesis. This is Glycerol-3-phosphate dehydrogenase [NAD(P)+] from Campylobacter lari (strain RM2100 / D67 / ATCC BAA-1060).